The sequence spans 548 residues: Chaperonin GroEL (548 aa).

ATP contacts are provided by residues 30 to 33 (TLGP), K51, 87 to 91 (DGTTT), G415, 479 to 481 (NAA), and D495. The segment at 524–548 (LPKEDKSSDSNSSPAGGMGGMGGMM) is disordered. The segment covering 539 to 548 (GGMGGMGGMM) has biased composition (gly residues).

This sequence belongs to the chaperonin (HSP60) family. As to quaternary structure, forms a cylinder of 14 subunits composed of two heptameric rings stacked back-to-back. Interacts with the co-chaperonin GroES.

Its subcellular location is the cytoplasm. The enzyme catalyses ATP + H2O + a folded polypeptide = ADP + phosphate + an unfolded polypeptide.. In terms of biological role, together with its co-chaperonin GroES, plays an essential role in assisting protein folding. The GroEL-GroES system forms a nano-cage that allows encapsulation of the non-native substrate proteins and provides a physical environment optimized to promote and accelerate protein folding. The protein is Chaperonin GroEL of Buchnera aphidicola subsp. Myzus persicae (Myzus persicae primary endosymbiont).